A 396-amino-acid chain; its full sequence is FAD-dependent monooxygenase phomE' (396 aa).

Glutamate 3 serves as a coordination point for FAD. Catalysis depends on residues arginine 158 and tyrosine 196. Residues aspartate 277 and glycine 290 each coordinate FAD.

Belongs to the paxM FAD-dependent monooxygenase family. Monomer. FAD serves as cofactor.

FAD-dependent monooxygenase; part of the gene cluster that mediates the biosynthesis of the phomopsins, a group of hexapeptide mycotoxins which infects lupins and causes lupinosis disease in livestock. The role of phomE' within the phomopsins biosynthesis pathway has still to be determined. The pathway starts with the processing of the precursor phomA by several endopeptidases including kexin proteases as well as the cluster-specific S41 family peptidase phomP1 and the oligopeptidase phomG to produce 10 identical copies of the hexapeptide Tyr-Val-Ile-Pro-Ile-Asp. After being excised from the precursor peptide, the core peptides are cyclized and modified post-translationally by enzymes encoded within the gene cluster. The timing and order of proteolysis of the phomA precursor and PTMs are still unknown. Two tyrosinase-like enzymes, phomQ1 and phomQ2, catalyze the chlorination and hydroxylation of Tyr, respectively. PhomYb, is proposed to be involved in the construction of the macrocyclic structure. The other 4 ustYa family proteins may be involved in PTMs that generate the unique structure of phomopsin A. PhomYa is required for the hydroxylation of C-beta of Tyr. PhomYc, phomYd, and phomYe are responsible for the biosynthesis of 2,3-dehydroisoleucine (dIle), 2,3-dehydroaspartic acid (dAsp), and 3,4-dehydroproline (dPro), respectively. While dIle formation by phomYc is indispensable for the installation of dAsp by phomYd, the order of the other PTMs have not been elucidated yet. Most of the biosynthetic enzymes likely have broad substrate specificity, and thus, there might be a metabolic grid from a precursor to phomopsin A. The enzyme(s) responsible for the biosynthesis of 3,4-dehydrovaline (dVal) have also not been identified yet. Finally, phomM acts as an S-adenosylmethionine-dependent alpha-N-methyltransferase that catalyzes two successive N-methylation reactions, converting N-desmethyl-phomopsin A to phomopsin A and phomopsin A further to an N,N-dimethylated congener called phomopsin E. This chain is FAD-dependent monooxygenase phomE', found in Diaporthe leptostromiformis (Lupinosis disease fungus).